We begin with the raw amino-acid sequence, 84 residues long: Hydramacin-1 (84 aa).

A signal peptide spans 1–24 (MRTVVFFILVSIFLVALKPTGTQA). Residue Gln-25 is modified to Pyrrolidone carboxylic acid. Disulfide bonds link Cys-29–Cys-72, Cys-36–Cys-65, Cys-51–Cys-81, and Cys-55–Cys-83.

As to expression, expressed in the endodermal epithelium.

It is found in the secreted. Its subcellular location is the target cell membrane. Cationic antimicrobial peptide potently active against Gram-positive and Gram-negative bacteria including multi-resistant human pathogenic strains. Is not active against the Gram-positive Coccus species, Gram-negative non-fermentation species and against the fungus C.albicans. It leads to aggregation of bacteria as an initial step of its bactericidal mechanism. Aggregated cells are connected via electron-dense contacts and adopt a thorn apple-like morphology. Hydramycin contains a belt of positively charged residues that separate two hydrophobic areas. This structure may explain the observed aggregation of bacteria, since each of these areas can immerse into the outer leaflets of the membranes of two individual bacteria. Is able to permeabilize membranes of viable bacteria at low and neutral pH values, but no pore-forming activity is not detected. The sequence is that of Hydramacin-1 from Hydra vulgaris (Hydra).